Reading from the N-terminus, the 255-residue chain is MRGVFIAGVIAAFAITVVDSLNCTQCYTYNSTCDGQATECNEQSFSCVESSINSTLGGFLHVYQNKFCSASNCTENSTEVAFTVHLFDDQRYHFASQCCQGESCNATHSESGTQNVTDMQCMSCYGHNKTLCEEKPQKCYEGEQCVFIIAEMVNGSGRVELKGCSDISNSTCQFLSPGNTTVGEFVFKSVECTQPTEYTNSTTTIPPITNTSLTSVTRPGIKTSPASVTPQASMGTKASFTSSIFGSLLLLKLLF.

A signal peptide spans 1–20; sequence MRGVFIAGVIAAFAITVVDS. N-linked (GlcNAc...) asparagine glycans are attached at residues Asn-22, Asn-30, Asn-53, Asn-72, Asn-76, Asn-105, Asn-115, Asn-128, Asn-154, Asn-169, Asn-179, Asn-200, and Asn-210. The 50-residue stretch at 121–170 folds into the UPAR/Ly6 domain; the sequence is CMSCYGHNKTLCEEKPQKCYEGEQCVFIIAEMVNGSGRVELKGCSDISNS. The GPI-anchor amidated serine moiety is linked to residue Ser-233. The propeptide at 234–255 is removed in mature form; sequence MGTKASFTSSIFGSLLLLKLLF.

This sequence belongs to the CNF-like-inhibitor family. In terms of processing, highly N-glycosylated. Not O-glycosylated. GPI-anchored. The GPI-anchor is cleaved, leading to secretion into the colonic lumen. In terms of tissue distribution, specifically present in enterocytes located at the uppermost epithelial layer of the colon (at protein level). Exclusively expressed in the large intestine: specifically expressed on the apical surface of epithelial cells located at the uppermost layer of the colonic gland.

The protein resides in the cell membrane. It localises to the secreted. In terms of biological role, secreted protein specifically required to prevent invasion of Gram-negative bacteria in the inner mucus layer of the colon epithelium, a portion of the large intestine which is free of commensal microbiota. Prevents invasion of flagellated microbiota by binding to the flagellum of bacteria, such as P.mirabilis, thereby inhibiting bacterial motility in the intestinal lumen. Segregation of intestinal bacteria and epithelial cells in the colon is required to preserve intestinal homeostasis. The polypeptide is Ly6/PLAUR domain-containing protein 8 (Mus musculus (Mouse)).